The sequence spans 603 residues: Beta-hexosaminidase (603 aa).

The N-terminal stretch at 1-19 is a signal peptide; the sequence is MAYFRLYAVLLAVASSVAA. Residues Asp225, His278, and Glu349 each act as charge relay system in the active site. Cys293 and Cys354 are oxidised to a cystine. N-linked (GlcNAc...) asparagine glycosylation is present at Asn356. Cys451 and Cys486 are oxidised to a cystine. N-linked (GlcNAc...) asparagine glycans are attached at residues Asn503 and Asn528. A disulfide bridge connects residues Cys586 and Cys593.

This sequence belongs to the glycosyl hydrolase 20 family. In terms of assembly, homodimer.

Its subcellular location is the secreted. The catalysed reaction is Hydrolysis of terminal non-reducing N-acetyl-D-hexosamine residues in N-acetyl-beta-D-hexosaminides.. Part of the binary chitinolytic system. Involved in hydrolysis of chitobiose and higher chito-oligomers (produced from cell wall chitin by endochitinases), thus contributing to the formation of germ tubes, fruit-bodies and septa during hyphenation. Hydrolyzes synthetic substrates p-nitrophenyl-beta-N-acetyl-glucosamine (pNP-beta-GlcNAc), p-nitrophenyl-beta-N-acetyl-galactosamine (pNP-beta-GalNAc) and 5-bromo-4-chloro-3-indoyl-beta-D-N-glucosaminide (X-GlcNAc). The protein is Beta-hexosaminidase of Emericella nidulans (Aspergillus nidulans).